The sequence spans 70 residues: Large ribosomal subunit protein eL38 (70 aa).

This sequence belongs to the eukaryotic ribosomal protein eL38 family.

This chain is Large ribosomal subunit protein eL38 (rpl-38), found in Ostertagia ostertagi (Brown stomach worm).